Here is a 263-residue protein sequence, read N- to C-terminus: Shikimate dehydrogenase (NADP(+)) (263 aa).

Shikimate contacts are provided by residues 14-16 and T60; that span reads SLS. Residue K64 is the Proton acceptor of the active site. Residues N85 and D100 each contribute to the shikimate site. Residues 123–127, 146–151, and L205 contribute to the NADP(+) site; these read GAGGA and NRTPQR. Y207 lines the shikimate pocket. Residue G228 participates in NADP(+) binding. Q235 lines the shikimate pocket.

This sequence belongs to the shikimate dehydrogenase family. Homodimer.

The enzyme catalyses shikimate + NADP(+) = 3-dehydroshikimate + NADPH + H(+). Its pathway is metabolic intermediate biosynthesis; chorismate biosynthesis; chorismate from D-erythrose 4-phosphate and phosphoenolpyruvate: step 4/7. Its function is as follows. Involved in the biosynthesis of the chorismate, which leads to the biosynthesis of aromatic amino acids. Catalyzes the reversible NADPH linked reduction of 3-dehydroshikimate (DHSA) to yield shikimate (SA). This Thermus thermophilus (strain ATCC 27634 / DSM 579 / HB8) protein is Shikimate dehydrogenase (NADP(+)).